Consider the following 97-residue polypeptide: Large ribosomal subunit protein eL30 (97 aa).

This sequence belongs to the eukaryotic ribosomal protein eL30 family.

This is Large ribosomal subunit protein eL30 from Methanoregula boonei (strain DSM 21154 / JCM 14090 / 6A8).